Reading from the N-terminus, the 1174-residue chain is Ribonucleoside-diphosphate reductase large subunit-like protein (1174 aa).

The RIP homotypic interaction motif (RHIM) signature appears at 50-72 (PYVRIMNGVSGIQIGNHNAMSIA). Disordered stretches follow at residues 170 to 269 (ASNA…KLKP) and 291 to 325 (AAAAVAPESESSPAASAPPAAAAMATGGDDEDQSS). Low complexity-rich tracts occupy residues 182–202 (ATSGAGSAAATPAATTPAATA), 233–243 (HVSVGTQATPS), and 291–316 (AAAAVAPESESSPAASAPPAAAAMAT).

This sequence belongs to the ribonucleoside diphosphate reductase large chain family. As to quaternary structure, self-assembles into homo-oligomeric amyloid fibrils. Interacts with host RIPK1 (via RIP homotypic interaction motif); this interaction inhibits RIPK1 ubiquitination thereby preventing effective activation of host NF-kappa-B. Interacts with host RIPK3 (via RIP homotypic interaction motif); this interaction disrupts RIPK3-RIPK1 interactions characteristic of TNF-alpha induced necroptosis, thereby suppressing this death pathway. Interacts (via RIP homotypic interaction motif) with host ZBP1 (via RIP homotypic interaction motif); this interaction inhibits recruitment of RIPK1 and RIPK3 to ZBP1 and prevents ZBP1-induced NF-kappa-B activation. Undergoes proteolytic cleavage, generating two peptides, a N-terminal and a 116 kDa. The N-terminal peptide retains RIPK1- and RIPK3-binding activity as well as cell death suppression activity.

It localises to the virion. The protein localises to the host cytoplasm. Functionally, provides optimal viral replication conditions by promoting host cell survival and avoiding the host inflammatory response linked to NF-kappa-B activation. Blocks RIPK1 ubiquitination, thereby preventing NF-kappa-B activation and virally induced inflammatory response. Prevents host necroptosis by targeting RIPK3 thereby preventing the formation of necroptotic RIPK1-RIPK3 complexes. Also inhibits ZBP1-induced necroptosis. Does not have ribonucleotide reductase activity. Betaherpesviruses probably use another strategy to expand the dNTP pool in a quiescent host cell. The polypeptide is Ribonucleoside-diphosphate reductase large subunit-like protein (Murid herpesvirus 1 (strain Smith) (MuHV-1)).